The chain runs to 465 residues: Mitochondrial-processing peptidase subunit beta (465 aa).

Residue His79 coordinates Zn(2+). Glu82 acts as the Proton acceptor in catalysis. Zn(2+)-binding residues include His83 and Glu159.

It belongs to the peptidase M16 family. Heterodimer of an alpha subunit and a beta subunit subunits, forming the mitochondrial processing protease (MPP) in which the alpha subunit is involved in substrate recognition and binding and the beta subunit is the catalytic subunit. Zn(2+) serves as cofactor.

It is found in the mitochondrion matrix. It carries out the reaction Release of N-terminal transit peptides from precursor proteins imported into the mitochondrion, typically with Arg in position P2.. With respect to regulation, binding to the alpha subunit is required for catalytic activity. Its function is as follows. Catalytic subunit of the essential mitochondrial processing protease (MPP), which cleaves the mitochondrial sequence off newly imported precursors proteins. Preferentially, cleaves after an arginine at position P2. The polypeptide is Mitochondrial-processing peptidase subunit beta (MPP1) (Blastocladiella emersonii (Aquatic fungus)).